The chain runs to 238 residues: Aspirochlorine biosynthesis protein N (238 aa).

It belongs to the asaB hydroxylase/desaturase family.

It functions in the pathway mycotoxin biosynthesis. Functionally, part of the gene cluster that mediates the biosynthesis of aspirochlorine (or antibiotic A30641), an unusual halogenated spiro compound with distinctive antifungal properties due to selective inhibition of protein biosynthesis, and which is also active against bacteria, viruses, and murine tumor cells. The non-ribosomal peptide synthetase (NRPS) aclP is responsible the formation of the diketopiperazine (DKP) core from the condensation of 2 phenylalanine residues. One Phe residue is tailored into chlorotyrosine by hydroxylation and chlorination, whereas the second Phe undergoes an unprecedented C-C bond cleavage to be converted into glycine. After formation of the DKP, sulfur is incorporated into the DKP by conjugation with glutathione by aclG, followed by its stepwise degradation to the thiol by aclI, aclJ and aclK, and the dithiol oxidation by aclT. In addition, oxygenases (aclB, aclC, aclL and aclO) and O-methyltransferases (aclM and aclU) act as tailoring enzymes to produce the intermediate dechloroaspirochlorine. Ultimately, chlorination of dechloroaspirochlorine by the halogenase aclH is the last step in the aspirochlorine pathway. In Aspergillus oryzae (strain ATCC 42149 / RIB 40) (Yellow koji mold), this protein is Aspirochlorine biosynthesis protein N.